A 171-amino-acid polypeptide reads, in one-letter code: Transcription antitermination protein NusB (171 aa).

It belongs to the NusB family.

In terms of biological role, involved in transcription antitermination. Required for transcription of ribosomal RNA (rRNA) genes. Binds specifically to the boxA antiterminator sequence of the ribosomal RNA (rrn) operons. The protein is Transcription antitermination protein NusB of Brucella abortus (strain S19).